The chain runs to 446 residues: ATP synthase subunit b-delta (446 aa).

The interval 1 to 168 is ATP synthase subunit b; that stretch reads MSTFIGQLVG…PKGADVEYPL (168 aa). A helical membrane pass occupies residues 4–24; it reads FIGQLVGFAAIVYLVWWYVVP. Residues 169-446 are ATP synthase subunit delta; it reads LAKMRSASRR…LVAAEAALPD (278 aa).

It in the N-terminal section; belongs to the ATPase B chain family. In the C-terminal section; belongs to the ATPase delta chain family. As to quaternary structure, F-type ATPases have 2 components, F(1) - the catalytic core - and F(0) - the membrane proton channel. F(1) has five subunits: alpha(3), beta(3), gamma(1), delta(1), epsilon(1). F(0) has three main subunits: a(1), b(2) and c(10-14). The alpha and beta chains form an alternating ring which encloses part of the gamma chain. F(1) is attached to F(0) by a central stalk formed by the gamma and epsilon chains, while a peripheral stalk is formed by the delta and b chains.

The protein resides in the cell membrane. In terms of biological role, f(1)F(0) ATP synthase produces ATP from ADP in the presence of a proton or sodium gradient. F-type ATPases consist of two structural domains, F(1) containing the extramembraneous catalytic core and F(0) containing the membrane proton channel, linked together by a central stalk and a peripheral stalk. During catalysis, ATP synthesis in the catalytic domain of F(1) is coupled via a rotary mechanism of the central stalk subunits to proton translocation. Its function is as follows. This fusion protein includes a component of the F(0) channel (subunit b) and of the F(1) subunit (subunit delta). Two copies of subunit b and one of delta together form the peripheral 'stator' stalk which links F(1) to F(0). The chain is ATP synthase subunit b-delta (atpFH) from Mycobacterium leprae (strain Br4923).